The primary structure comprises 313 residues: Porphobilinogen deaminase (313 aa).

Residue cysteine 242 is modified to S-(dipyrrolylmethanemethyl)cysteine.

The protein belongs to the HMBS family. As to quaternary structure, monomer. Requires dipyrromethane as cofactor.

It catalyses the reaction 4 porphobilinogen + H2O = hydroxymethylbilane + 4 NH4(+). The protein operates within porphyrin-containing compound metabolism; protoporphyrin-IX biosynthesis; coproporphyrinogen-III from 5-aminolevulinate: step 2/4. Functionally, tetrapolymerization of the monopyrrole PBG into the hydroxymethylbilane pre-uroporphyrinogen in several discrete steps. This Shigella flexneri protein is Porphobilinogen deaminase.